The following is a 447-amino-acid chain: Tubulin beta chain (447 aa).

GTP-binding residues include Q11, E69, S138, G142, T143, G144, N204, and N226. Position 69 (E69) interacts with Mg(2+). The segment at 424 to 447 (QYQDASISEGEEDYEEEPQVENEE) is disordered. The span at 432 to 447 (EGEEDYEEEPQVENEE) shows a compositional bias: acidic residues.

It belongs to the tubulin family. As to quaternary structure, dimer of alpha and beta chains. A typical microtubule is a hollow water-filled tube with an outer diameter of 25 nm and an inner diameter of 15 nM. Alpha-beta heterodimers associate head-to-tail to form protofilaments running lengthwise along the microtubule wall with the beta-tubulin subunit facing the microtubule plus end conferring a structural polarity. Microtubules usually have 13 protofilaments but different protofilament numbers can be found in some organisms and specialized cells. Mg(2+) serves as cofactor.

It localises to the cytoplasm. The protein localises to the cytoskeleton. In terms of biological role, tubulin is the major constituent of microtubules, a cylinder consisting of laterally associated linear protofilaments composed of alpha- and beta-tubulin heterodimers. Microtubules grow by the addition of GTP-tubulin dimers to the microtubule end, where a stabilizing cap forms. Below the cap, tubulin dimers are in GDP-bound state, owing to GTPase activity of alpha-tubulin. The protein is Tubulin beta chain of Uncinula necator (Grape powdery mildew).